The following is a 421-amino-acid chain: Testin (421 aa).

One can recognise a PET domain in the interval 92-199 (MILTNPVAAK…GDVKLPCEMD (108 aa)). The segment at 133-164 (EKQPVAGSEGAQYRKKQLAKQLPAHDQDPSKC) is disordered. The segment covering 155–164 (PAHDQDPSKC) has biased composition (basic and acidic residues). LIM zinc-binding domains lie at 234 to 297 (YSCY…CDSE), 299 to 359 (PRCA…NHAV), and 362 to 421 (QGCH…KMMS).

It belongs to the prickle / espinas / testin family. As to quaternary structure, interacts via LIM domain 1 with ZYX. Interacts (via LIM domain 3) with ENAH and VASP. Interacts with ALKBH4, talin, actin, alpha-actinin, GRIP1 and PXN. Interacts (via LIM domain 2) with ACTL7A (via N-terminus). Heterodimer with ACTL7A; the heterodimer interacts with ENAH to form a heterotrimer.

It localises to the cytoplasm. It is found in the cell junction. The protein resides in the focal adhesion. In terms of biological role, scaffold protein that may play a role in cell adhesion, cell spreading and in the reorganization of the actin cytoskeleton. Plays a role in the regulation of cell proliferation. May act as a tumor suppressor. The polypeptide is Testin (TES) (Ateles geoffroyi (Black-handed spider monkey)).